A 122-amino-acid polypeptide reads, in one-letter code: Large ribosomal subunit protein uL14 (122 aa).

It belongs to the universal ribosomal protein uL14 family. In terms of assembly, part of the 50S ribosomal subunit. Forms a cluster with proteins L3 and L19. In the 70S ribosome, L14 and L19 interact and together make contacts with the 16S rRNA in bridges B5 and B8.

Functionally, binds to 23S rRNA. Forms part of two intersubunit bridges in the 70S ribosome. The protein is Large ribosomal subunit protein uL14 of Parafrankia sp. (strain EAN1pec).